Here is a 2774-residue protein sequence, read N- to C-terminus: Teneurin-2 (2774 aa).

One can recognise a Teneurin N-terminal domain in the interval methionine 1–cysteine 375. The Cytoplasmic segment spans residues methionine 1–serine 379. A phosphoserine mark is found at serine 90 and serine 124. Positions threonine 111–asparagine 271 are disordered. Residues serine 141–threonine 155 show a composition bias toward polar residues. Threonine 155 is subject to Phosphothreonine. Position 157 is a phosphoserine (serine 157). Positions asparagine 159–glycine 168 are enriched in basic and acidic residues. The span at threonine 174 to serine 188 shows a compositional bias: low complexity. The segment covering aspartate 202–aspartate 211 has biased composition (polar residues). Over residues serine 229–proline 240 the composition is skewed to low complexity. Residues alanine 380–leucine 400 traverse the membrane as a helical segment. Over glycine 401–arginine 2774 the chain is Extracellular. Residues asparagine 443 and asparagine 482 are each glycosylated (N-linked (GlcNAc...) asparagine). EGF-like domains are found at residues aspartate 575–alanine 603, alanine 605–aspartate 634, proline 636–glutamate 668, glutamate 669–leucine 701, alanine 702–serine 735, valine 738–aspartate 766, valine 769–threonine 797, and aspartate 808–asparagine 841. 22 disulfides stabilise this stretch: cysteine 576–cysteine 586, cysteine 580–cysteine 591, cysteine 593–cysteine 602, cysteine 611–cysteine 622, cysteine 624–cysteine 633, cysteine 640–cysteine 651, cysteine 645–cysteine 656, cysteine 658–cysteine 667, cysteine 672–cysteine 683, cysteine 677–cysteine 688, cysteine 690–cysteine 699, cysteine 710–cysteine 723, cysteine 725–cysteine 734, cysteine 739–cysteine 749, cysteine 743–cysteine 754, cysteine 756–cysteine 765, cysteine 770–cysteine 780, cysteine 774–cysteine 785, cysteine 787–cysteine 796, cysteine 810–cysteine 820, cysteine 814–cysteine 829, and cysteine 831–cysteine 840. Asparagine 925, asparagine 948, and asparagine 1267 each carry an N-linked (GlcNAc...) asparagine glycan. 5 NHL repeats span residues leucine 1272–leucine 1316, alanine 1342–isoleucine 1386, leucine 1401–arginine 1452, leucine 1474–leucine 1501, and cysteine 1530–asparagine 1573. A YD 1 repeat occupies tyrosine 1583–histidine 1602. N-linked (GlcNAc...) asparagine glycosylation is present at asparagine 1616. YD repeat units lie at residues tyrosine 1619–arginine 1639, tyrosine 1682–phenylalanine 1701, and tyrosine 1702–histidine 1724. Asparagine 1712, asparagine 1749, asparagine 1773, asparagine 1807, and asparagine 1892 each carry an N-linked (GlcNAc...) asparagine glycan. YD repeat units follow at residues tyrosine 1895–aspartate 1914, tyrosine 1936–glutamate 1954, tyrosine 1955–serine 1975, tyrosine 1982–aspartate 1999, tyrosine 2000–lysine 2021, tyrosine 2022–threonine 2039, tyrosine 2042–threonine 2062, tyrosine 2065–isoleucine 2085, tyrosine 2093–proline 2113, tyrosine 2119–tyrosine 2136, tyrosine 2137–valine 2163, tyrosine 2165–glutamine 2178, tyrosine 2179–threonine 2202, tyrosine 2205–serine 2225, tyrosine 2226–leucine 2246, tyrosine 2248–glycine 2268, tyrosine 2280–tyrosine 2300, and tyrosine 2302–phenylalanine 2322. Asparagine 1993 carries N-linked (GlcNAc...) asparagine glycosylation. Asparagine 2197 is a glycosylation site (N-linked (GlcNAc...) asparagine). Residue asparagine 2337 is glycosylated (N-linked (GlcNAc...) asparagine). The YD 23 repeat unit spans residues tyrosine 2348–leucine 2389. The N-linked (GlcNAc...) asparagine glycan is linked to asparagine 2648.

The protein belongs to the tenascin family. Teneurin subfamily. Homodimer; disulfide-linked. Heterodimer with either TENM1 or TENM3. May also form heterodimer with TENM4. Interacts with ADGRL1 isoform 2. Post-translationally, derives from the membrane form by proteolytic processing. Derives from the plasma membrane form by proteolytic cleavage and translocates to the nucleus. Homophilic binding of the C-terminal extracellular domain stimulates its proteolytic cleavage and release in the cytoplasmic. Is subjected to rapid degradation by the proteasome pathway. In terms of tissue distribution, expressed in the brain (at protein level).

The protein localises to the cell membrane. It is found in the presynaptic cell membrane. It localises to the postsynaptic cell membrane. Its subcellular location is the endoplasmic reticulum. The protein resides in the golgi apparatus. The protein localises to the synapse. It is found in the cell projection. It localises to the dendritic spine. Its subcellular location is the filopodium. The protein resides in the growth cone. The protein localises to the nucleus. It is found in the PML body. Its function is as follows. Involved in neural development, regulating the establishment of proper connectivity within the nervous system. Acts as a ligand of the ADGRL1 and ADGRL3 receptors that are expressed at the surface of adjacent cells. Promotes the formation of filopodia and enlarged growth cone in neuronal cells. Mediates axon guidance and homophilic and heterophilic cell-cell adhesion. May function as a cellular signal transducer. Functionally, induces gene transcription inhibition. The polypeptide is Teneurin-2 (Tenm2) (Rattus norvegicus (Rat)).